The chain runs to 263 residues: Putative hydro-lyase Pden_0321 (263 aa).

The protein belongs to the D-glutamate cyclase family.

This Paracoccus denitrificans (strain Pd 1222) protein is Putative hydro-lyase Pden_0321.